We begin with the raw amino-acid sequence, 334 residues long: tRNA methyltransferase 10 homolog A (334 aa).

Disordered stretches follow at residues 1–101 (MSLE…SRKR) and 290–334 (PLTE…EQNS). The segment covering 26-40 (HAGNNTPLQENSSAP) has biased composition (polar residues). A coiled-coil region spans residues 62–94 (KQWEDQRELRKQKRKEKRQKRKLERQAQAEHNI). Over residues 71–84 (RKQKRKEKRQKRKL) the composition is skewed to basic residues. A compositionally biased stretch (basic and acidic residues) spans 85–98 (ERQAQAEHNIDANS). Positions 98 to 289 (SRKRFRHEVQ…SVLPQRKGAI (192 aa)) constitute an SAM-dependent MTase TRM10-type domain. The segment covering 305–317 (QEDGEDSDSDSSI) has biased composition (acidic residues).

This sequence belongs to the class IV-like SAM-binding methyltransferase superfamily. TRM10 family.

The catalysed reaction is guanosine(9) in tRNA + S-adenosyl-L-methionine = N(1)-methylguanosine(9) in tRNA + S-adenosyl-L-homocysteine + H(+). Functionally, S-adenosyl-L-methionine-dependent guanine N(1)-methyltransferase that catalyzes the formation of N(1)-methylguanine at position 9 (m1G9) in tRNAs. Probably not able to catalyze formation of N(1)-methyladenine at position 9 (m1A9) in tRNAs. In Xenopus tropicalis (Western clawed frog), this protein is tRNA methyltransferase 10 homolog A (trmt10a).